Consider the following 200-residue polypeptide: Outer-membrane lipoprotein carrier protein (200 aa).

An N-terminal signal peptide occupies residues 1–18 (MKAVVFAMVMAVSFNVFA).

The protein belongs to the LolA family. As to quaternary structure, monomer.

The protein resides in the periplasm. Functionally, participates in the translocation of lipoproteins from the inner membrane to the outer membrane. Only forms a complex with a lipoprotein if the residue after the N-terminal Cys is not an aspartate (The Asp acts as a targeting signal to indicate that the lipoprotein should stay in the inner membrane). The polypeptide is Outer-membrane lipoprotein carrier protein (Idiomarina loihiensis (strain ATCC BAA-735 / DSM 15497 / L2-TR)).